The sequence spans 411 residues: Copper resistance protein CRF1 (411 aa).

A DNA-binding region (copper-fist) is located at residues 1–40; the sequence is MVVIEGIKYACERCIRGHRVSSCTHTQQPLIRIKPKGRPA. Zn(2+) is bound by residues Cys-11, Cys-14, Cys-23, and His-25. Composition is skewed to low complexity over residues 115-190, 205-214, 227-241, and 350-370; these read QQQA…PHSP, SSSSLSSLHS, SHNSLSAASQLANSP, and SVAANPSASASASSIQTPPSS. Disordered stretches follow at residues 115–241 and 348–389; these read QQQA…ANSP and EMSV…VSPA.

It localises to the nucleus. In terms of biological role, transcriptional regulator involved in resistance to high copper concentration. This Yarrowia lipolytica (strain CLIB 122 / E 150) (Yeast) protein is Copper resistance protein CRF1 (CRF1).